The sequence spans 326 residues: N-acetyl-gamma-glutamyl-phosphate reductase (326 aa).

The active site involves C155.

This sequence belongs to the NAGSA dehydrogenase family. Type 1 subfamily.

It is found in the cytoplasm. It carries out the reaction N-acetyl-L-glutamate 5-semialdehyde + phosphate + NADP(+) = N-acetyl-L-glutamyl 5-phosphate + NADPH + H(+). The protein operates within amino-acid biosynthesis; L-arginine biosynthesis; N(2)-acetyl-L-ornithine from L-glutamate: step 3/4. In terms of biological role, catalyzes the NADPH-dependent reduction of N-acetyl-5-glutamyl phosphate to yield N-acetyl-L-glutamate 5-semialdehyde. The polypeptide is N-acetyl-gamma-glutamyl-phosphate reductase (Shewanella loihica (strain ATCC BAA-1088 / PV-4)).